A 94-amino-acid chain; its full sequence is Small ribosomal subunit protein bS6 (94 aa).

This sequence belongs to the bacterial ribosomal protein bS6 family.

Functionally, binds together with bS18 to 16S ribosomal RNA. The sequence is that of Small ribosomal subunit protein bS6 from Clostridium botulinum (strain Loch Maree / Type A3).